Here is a 596-residue protein sequence, read N- to C-terminus: Proline--tRNA ligase (596 aa).

The protein belongs to the class-II aminoacyl-tRNA synthetase family. ProS type 1 subfamily. In terms of assembly, homodimer.

The protein resides in the cytoplasm. The enzyme catalyses tRNA(Pro) + L-proline + ATP = L-prolyl-tRNA(Pro) + AMP + diphosphate. Catalyzes the attachment of proline to tRNA(Pro) in a two-step reaction: proline is first activated by ATP to form Pro-AMP and then transferred to the acceptor end of tRNA(Pro). As ProRS can inadvertently accommodate and process non-cognate amino acids such as alanine and cysteine, to avoid such errors it has two additional distinct editing activities against alanine. One activity is designated as 'pretransfer' editing and involves the tRNA(Pro)-independent hydrolysis of activated Ala-AMP. The other activity is designated 'posttransfer' editing and involves deacylation of mischarged Ala-tRNA(Pro). The misacylated Cys-tRNA(Pro) is not edited by ProRS. The sequence is that of Proline--tRNA ligase from Prochlorococcus marinus (strain NATL2A).